The primary structure comprises 170 residues: Adenine phosphoribosyltransferase (170 aa).

It belongs to the purine/pyrimidine phosphoribosyltransferase family. Homodimer.

It localises to the cytoplasm. It carries out the reaction AMP + diphosphate = 5-phospho-alpha-D-ribose 1-diphosphate + adenine. The protein operates within purine metabolism; AMP biosynthesis via salvage pathway; AMP from adenine: step 1/1. Functionally, catalyzes a salvage reaction resulting in the formation of AMP, that is energically less costly than de novo synthesis. The chain is Adenine phosphoribosyltransferase from Oceanobacillus iheyensis (strain DSM 14371 / CIP 107618 / JCM 11309 / KCTC 3954 / HTE831).